Consider the following 837-residue polypeptide: V-type proton ATPase 116 kDa subunit a 1 (837 aa).

The Cytoplasmic portion of the chain corresponds to 1-388 (MGELFRSEEM…DAYGIGTYRE (388 aa)). Residues threonine 250 and threonine 360 each carry the phosphothreonine modification. The residue at position 364 (tyrosine 364) is a Phosphotyrosine. Residues 389–407 (INPAPYTIITFPFLFAVMF) traverse the membrane as a helical segment. Topologically, residues 408–409 (GD) are vacuolar. A helical transmembrane segment spans residues 410–426 (FGHGILMTLFAVWMVLR). Topologically, residues 427 to 441 (ESRILSQKNENEMFS) are cytoplasmic. A helical transmembrane segment spans residues 442–471 (TVFSGRYIILLMGVFSMYTGLIYNDCFSKS). Residues 472-534 (LNIFGSSWSV…ATNKLTFLNS (63 aa)) are Vacuolar-facing. A helical membrane pass occupies residues 535 to 554 (FKMKMSVILGIIHMLFGVSL). Residues 555 to 572 (SLFNHIYFKKPLNIYFGF) are Cytoplasmic-facing. A helical transmembrane segment spans residues 573 to 593 (IPEIIFMTSLFGYLVILIFYK). Over 594 to 638 (WTAYDAHTSENAPSLLIHFINMFLFSYPESGYSMLYSGQKGIQCF) the chain is Vacuolar. The helical transmembrane segment at 639–658 (LVVVALLCVPWMLLFKPLVL) threads the bilayer. The Cytoplasmic segment spans residues 659–724 (RRQYLRRKHL…ATMVHQAIHT (66 aa)). A helical membrane pass occupies residues 725–749 (IEYCLGCISNTASYLRLWALSLAHA). The Vacuolar segment spans residues 750-770 (QLSEVLWTMVIHIGLSVKSLA). The chain crosses the membrane as a helical span at residues 771–809 (GGLVLFFFFTAFATLTVAILLIMEGLSAFLHALRLHWVE). Residues 810 to 837 (FQNKFYSGTGFKFLPFSFEHIREGKFGE) are Cytoplasmic-facing.

This sequence belongs to the V-ATPase 116 kDa subunit family. In terms of assembly, V-ATPase is a heteromultimeric enzyme made up of two complexes: the ATP-hydrolytic V1 complex and the proton translocation V0 complex. The V1 complex consists of three catalytic AB heterodimers that form a heterohexamer, three peripheral stalks each consisting of EG heterodimers, one central rotor including subunits D and F, and the regulatory subunits C and H. The proton translocation complex V0 consists of the proton transport subunit a, a ring of proteolipid subunits c9c'', rotary subunit d, subunits e and f, and the accessory subunits ATP6AP1/Ac45 and ATP6AP2/PRR. Interacts with SPAAR.

It is found in the cytoplasmic vesicle. Its subcellular location is the clathrin-coated vesicle membrane. It localises to the secretory vesicle. The protein localises to the synaptic vesicle membrane. The protein resides in the melanosome. In terms of biological role, subunit of the V0 complex of vacuolar(H+)-ATPase (V-ATPase), a multisubunit enzyme composed of a peripheral complex (V1) that hydrolyzes ATP and a membrane integral complex (V0) that translocates protons. V-ATPase is responsible for the acidification of various organelles, such as lysosomes, endosomes, the trans-Golgi network, and secretory granules, including synaptic vesicles. In certain cell types, can be exported to the plasma membrane, where it is involved in the acidification of the extracellular environment. Required for assembly and activity of the vacuolar ATPase. Through its action on compartment acidification, plays an essential role in neuronal development in terms of integrity and connectivity of neurons. The sequence is that of V-type proton ATPase 116 kDa subunit a 1 (ATP6V0A1) from Pongo abelii (Sumatran orangutan).